The sequence spans 252 residues: E3 ubiquitin-protein ligase MARCHF3 (252 aa).

The segment at 62-122 (SSFNDHPMCR…ELCHFRFSVE (61 aa)) adopts an RING-CH-type zinc-finger fold. 8 residues coordinate Zn(2+): Cys70, Cys73, Cys86, Cys88, His96, Cys99, Cys112, and Cys115. The next 2 membrane-spanning stretches (helical) occupy residues 144–164 (LFGD…SGWL) and 181–201 (AVGL…WTLV).

The protein localises to the cytoplasmic vesicle membrane. It localises to the early endosome membrane. The enzyme catalyses S-ubiquitinyl-[E2 ubiquitin-conjugating enzyme]-L-cysteine + [acceptor protein]-L-lysine = [E2 ubiquitin-conjugating enzyme]-L-cysteine + N(6)-ubiquitinyl-[acceptor protein]-L-lysine.. The protein operates within protein modification; protein ubiquitination. In terms of biological role, E3 ubiquitin-protein ligase which may be involved in endosomal trafficking. E3 ubiquitin ligases accept ubiquitin from an E2 ubiquitin-conjugating enzyme in the form of a thioester and then directly transfer the ubiquitin to targeted substrates. The protein is E3 ubiquitin-protein ligase MARCHF3 (marchf3) of Xenopus laevis (African clawed frog).